The sequence spans 748 residues: Transcription factor hmgR (748 aa).

Positions cysteine 24–cysteine 59 form a DNA-binding region, zn(2)-C6 fungal-type. 2 disordered regions span residues serine 108–leucine 142 and arginine 661–alanine 683.

It localises to the nucleus. Its function is as follows. Transcription factor; part of the L-tyrosine degradation gene cluster that mediates the biosynthesis of the brownish pigment pyomelanin as an alternative melanin. Acts as a transcriptional activator for the genes of the tyrosine degradation cluster. The polypeptide is Transcription factor hmgR (Aspergillus fumigatus (strain ATCC MYA-4609 / CBS 101355 / FGSC A1100 / Af293) (Neosartorya fumigata)).